The primary structure comprises 1872 residues: Histone acetyltransferase KAT6B (1872 aa).

The 77-residue stretch at 1–77 folds into the SAMD1-like winged helix (WH) domain; that stretch reads MVKLANPLYT…LASYKDPDNP (77 aa). Disordered regions lie at residues 70-103 and 168-207; these read SYKD…CNDL and KEGP…HEKD. Residues 104–177 enclose the H15 domain; sequence RNVDWNKLLK…KEGPQYRVNS (74 aa). Residues 189–202 show a composition bias toward low complexity; that stretch reads PSAFPSSLPPVSLL. PHD-type zinc fingers lie at residues 214–273 and 270–321; these read IPIC…CKTC and CKTC…CRPK. A Phosphoserine modification is found at serine 356. The tract at residues 361-417 is disordered; sequence EGSMSAFTGRGSPGRGQKTKVSTTPSSGHAASGKHSSSRLAVTDPTRPGATTKTTTS. Residues 362–535 are negatively regulates HAT activity; the sequence is GSMSAFTGRG…ECESGVEDCG (174 aa). Residues 386–395 show a composition bias toward low complexity; the sequence is SSGHAASGKH. Lysine 491 is covalently cross-linked (Glycyl lysine isopeptide (Lys-Gly) (interchain with G-Cter in SUMO2)). The MYST-type HAT domain maps to 533-807; the sequence is DCGRYPSVIE…LDPESLRWTP (275 aa). The segment at 536-826 is catalytic; the sequence is RYPSVIEFGK…EEEREAEKEA (291 aa). The C2HC MYST-type zinc finger occupies 566–591; the sequence is LYLCEFCLKYMKSKNILLRHSKKCGW. The tract at residues 570–826 is interaction with BRPF1; the sequence is EFCLKYMKSK…EEEREAEKEA (257 aa). N6-acetyllysine; by autocatalysis is present on lysine 633. Residues 674-678 and 683-689 each bind acetyl-CoA; these read SCIMI and QRQGFGR. The Proton donor/acceptor role is filled by glutamate 709. Residue serine 713 participates in acetyl-CoA binding. Residues 846–860 show a composition bias toward low complexity; the sequence is SRVSSRQSSAKVQSK. 4 disordered regions span residues 846–1018, 1031–1252, 1283–1358, and 1388–1418; these read SRVS…NHFF, DAEH…FKDA, MSCN…DDTF, and DECQ…SPSV. Residues lysine 856, lysine 860, and lysine 862 each carry the N6-acetyllysine modification. Position 866 is a phosphoserine (serine 866). Positions 887–909 are enriched in acidic residues; that stretch reads SEEEEEEEEEDDEEEEEEEEEES. Residues 910–924 are compositionally biased toward polar residues; it reads IQTSPPRLTKPQSVS. Basic residues predominate over residues 925 to 944; sequence IKRKRPFVVKKKRGRKRRRI. Residues 946–959 show a composition bias toward low complexity; it reads SSVTTETISETTEV. Basic residues predominate over residues 991-1004; sequence PVLRKAFPHQPGKK. Composition is skewed to basic and acidic residues over residues 1031–1047 and 1094–1114; these read DAEH…EPLK and EEQK…REVT. The segment covering 1155 to 1176 has biased composition (acidic residues); that stretch reads EEGEEEGEEEGEREEQEEEEEV. Residues 1177–1207 show a composition bias toward basic and acidic residues; the sequence is TTEKDLDGAKSKENPEPEISMEKEDPVHLGD. Acidic residues predominate over residues 1208 to 1217; sequence HEEDEDEEEE. 2 stretches are compositionally biased toward basic and acidic residues: residues 1238-1252 and 1310-1320; these read NMER…FKDA and QTQKQDQKNSD. Residues 1339–1349 are compositionally biased toward polar residues; sequence ETAQAVQSLTQ. The interval 1359–1872 is interaction with RUNX1 and RUNX2; the sequence is PDCAETQEAC…QSLNGSYMRR (514 aa). A compositionally biased stretch (low complexity) spans 1393-1410; sequence SDHSSPVSSVHSHPGQSV.

This sequence belongs to the MYST (SAS/MOZ) family. In terms of assembly, component of the MOZ/MORF complex composed at least of ING5, KAT6A, KAT6B, MEAF6 and one of BRPF1, BRD1/BRPF2 and BRPF3. Interacts with RUNX1 and RUNX2. Autoacetylation at Lys-633 is required for proper function. In terms of tissue distribution, ubiquitously expressed.

Its subcellular location is the nucleus. The enzyme catalyses L-lysyl-[protein] + acetyl-CoA = N(6)-acetyl-L-lysyl-[protein] + CoA + H(+). In terms of biological role, histone acetyltransferase which may be involved in both positive and negative regulation of transcription. Required for RUNX2-dependent transcriptional activation. Component of the MOZ/MORF complex which has a histone H3 acetyltransferase activity. Involved in cerebral cortex development. This Mus musculus (Mouse) protein is Histone acetyltransferase KAT6B (Kat6b).